A 76-amino-acid chain; its full sequence is U-scoloptoxin(13)-Sa1a (76 aa).

The signal sequence occupies residues 1–22 (MAYIFALIFAFVVCINTDVIQA).

Belongs to the scoloptoxin-13 family. Post-translationally, contains 4 disulfide bonds. Expressed by the venom gland.

It is found in the secreted. The polypeptide is U-scoloptoxin(13)-Sa1a (Scolopendra alternans (Florida Keys giant centipede)).